Reading from the N-terminus, the 445-residue chain is Phosphoglucosamine mutase (445 aa).

Serine 99 serves as the catalytic Phosphoserine intermediate. Mg(2+) is bound by residues serine 99, aspartate 242, aspartate 244, and aspartate 246. Serine 99 carries the phosphoserine modification.

The protein belongs to the phosphohexose mutase family. Requires Mg(2+) as cofactor. Activated by phosphorylation.

It carries out the reaction alpha-D-glucosamine 1-phosphate = D-glucosamine 6-phosphate. Its function is as follows. Catalyzes the conversion of glucosamine-6-phosphate to glucosamine-1-phosphate. This chain is Phosphoglucosamine mutase, found in Helicobacter pylori (strain Shi470).